The chain runs to 294 residues: ATP synthase gamma chain (294 aa).

It belongs to the ATPase gamma chain family. As to quaternary structure, F-type ATPases have 2 components, CF(1) - the catalytic core - and CF(0) - the membrane proton channel. CF(1) has five subunits: alpha(3), beta(3), gamma(1), delta(1), epsilon(1). CF(0) has three main subunits: a, b and c.

It localises to the cell inner membrane. Functionally, produces ATP from ADP in the presence of a proton gradient across the membrane. The gamma chain is believed to be important in regulating ATPase activity and the flow of protons through the CF(0) complex. The chain is ATP synthase gamma chain from Nitratiruptor sp. (strain SB155-2).